A 72-amino-acid chain; its full sequence is Exodeoxyribonuclease 7 small subunit (72 aa).

Belongs to the XseB family. In terms of assembly, heterooligomer composed of large and small subunits.

The protein resides in the cytoplasm. It carries out the reaction Exonucleolytic cleavage in either 5'- to 3'- or 3'- to 5'-direction to yield nucleoside 5'-phosphates.. In terms of biological role, bidirectionally degrades single-stranded DNA into large acid-insoluble oligonucleotides, which are then degraded further into small acid-soluble oligonucleotides. The polypeptide is Exodeoxyribonuclease 7 small subunit (Chlamydia trachomatis serovar A (strain ATCC VR-571B / DSM 19440 / HAR-13)).